The primary structure comprises 471 residues: 4-aminobutyrate aminotransferase (471 aa).

Pyridoxal 5'-phosphate is bound at residue 135–136; that stretch reads GA. Arg-192 is a substrate binding site. Lys-326 carries the post-translational modification N6-(pyridoxal phosphate)lysine. Pyridoxal 5'-phosphate is bound at residue Thr-351.

Belongs to the class-III pyridoxal-phosphate-dependent aminotransferase family. In terms of assembly, homodimer and homotetramer. Requires pyridoxal 5'-phosphate as cofactor.

The protein resides in the cytoplasm. It catalyses the reaction 4-aminobutanoate + 2-oxoglutarate = succinate semialdehyde + L-glutamate. Functionally, required for the degradation of gamma-aminobutyric acid (GABA), which is important for utilization of GABA as nitrogen source and for oxidative stress tolerance. Deaminates GABA to succinate semialdehyde, which in turn is converted to succinate by the succinate-semialdehyde dehydrogenase UGA2. Cannot transaminate beta-alanine (BAL). The chain is 4-aminobutyrate aminotransferase (UGA1) from Saccharomyces cerevisiae (strain ATCC 204508 / S288c) (Baker's yeast).